Here is an 85-residue protein sequence, read N- to C-terminus: Small ribosomal subunit protein uS17 (85 aa).

Belongs to the universal ribosomal protein uS17 family. Part of the 30S ribosomal subunit.

Its function is as follows. One of the primary rRNA binding proteins, it binds specifically to the 5'-end of 16S ribosomal RNA. The protein is Small ribosomal subunit protein uS17 of Desulfosudis oleivorans (strain DSM 6200 / JCM 39069 / Hxd3) (Desulfococcus oleovorans).